The following is a 251-amino-acid chain: Triosephosphate isomerase (251 aa).

Residue 9–11 (NWK) coordinates substrate. H94 functions as the Electrophile in the catalytic mechanism. E166 functions as the Proton acceptor in the catalytic mechanism. Residues G172, S211, and 232–233 (GG) contribute to the substrate site.

This sequence belongs to the triosephosphate isomerase family. In terms of assembly, homodimer.

It localises to the cytoplasm. The enzyme catalyses D-glyceraldehyde 3-phosphate = dihydroxyacetone phosphate. It participates in carbohydrate biosynthesis; gluconeogenesis. It functions in the pathway carbohydrate degradation; glycolysis; D-glyceraldehyde 3-phosphate from glycerone phosphate: step 1/1. Its function is as follows. Involved in the gluconeogenesis. Catalyzes stereospecifically the conversion of dihydroxyacetone phosphate (DHAP) to D-glyceraldehyde-3-phosphate (G3P). The protein is Triosephosphate isomerase of Xanthomonas oryzae pv. oryzae (strain MAFF 311018).